Here is a 185-residue protein sequence, read N- to C-terminus: Hypoxanthine/guanine phosphoribosyltransferase (185 aa).

This sequence belongs to the purine/pyrimidine phosphoribosyltransferase family. Archaeal HPRT subfamily. In terms of assembly, homodimer.

The protein localises to the cytoplasm. It catalyses the reaction IMP + diphosphate = hypoxanthine + 5-phospho-alpha-D-ribose 1-diphosphate. It carries out the reaction GMP + diphosphate = guanine + 5-phospho-alpha-D-ribose 1-diphosphate. The protein operates within purine metabolism; IMP biosynthesis via salvage pathway; IMP from hypoxanthine: step 1/1. In terms of biological role, catalyzes a salvage reaction resulting in the formation of IMP that is energically less costly than de novo synthesis. The chain is Hypoxanthine/guanine phosphoribosyltransferase from Methanococcus vannielii (strain ATCC 35089 / DSM 1224 / JCM 13029 / OCM 148 / SB).